The sequence spans 443 residues: Protein translocase subunit SecY (443 aa).

The next 10 helical transmembrane spans lie at 24–44 (LFVIGALIVFRIGSFIPIPGI), 77–97 (IFALGIMPYISASIIIQLLTV), 125–145 (LVLAIFQSIGIATGLPNMPGM), 154–174 (FAFYFTAVVSLVTGTMFLMWL), 183–203 (IGNGISIIIFAGIVAGLPPAI), 217–237 (FLVLLLVAVLVFAVTFFVVFV), 274–294 (VIPAIFASSIILFPATIASWF), 317–337 (YVLLYASAIIFFCFFYTALVF), 370–390 (MTRLTLVGALYITFICLIPEF), and 397–417 (VPFYFGGTSLLIVVVVIMDFM).

The protein belongs to the SecY/SEC61-alpha family. Component of the Sec protein translocase complex. Heterotrimer consisting of SecY, SecE and SecG subunits. The heterotrimers can form oligomers, although 1 heterotrimer is thought to be able to translocate proteins. Interacts with the ribosome. Interacts with SecDF, and other proteins may be involved. Interacts with SecA.

It localises to the cell inner membrane. In terms of biological role, the central subunit of the protein translocation channel SecYEG. Consists of two halves formed by TMs 1-5 and 6-10. These two domains form a lateral gate at the front which open onto the bilayer between TMs 2 and 7, and are clamped together by SecE at the back. The channel is closed by both a pore ring composed of hydrophobic SecY resides and a short helix (helix 2A) on the extracellular side of the membrane which forms a plug. The plug probably moves laterally to allow the channel to open. The ring and the pore may move independently. This Escherichia coli O157:H7 protein is Protein translocase subunit SecY.